Reading from the N-terminus, the 83-residue chain is Exodeoxyribonuclease 7 small subunit (83 aa).

The protein belongs to the XseB family. In terms of assembly, heterooligomer composed of large and small subunits.

The protein localises to the cytoplasm. The catalysed reaction is Exonucleolytic cleavage in either 5'- to 3'- or 3'- to 5'-direction to yield nucleoside 5'-phosphates.. In terms of biological role, bidirectionally degrades single-stranded DNA into large acid-insoluble oligonucleotides, which are then degraded further into small acid-soluble oligonucleotides. This is Exodeoxyribonuclease 7 small subunit from Rhizobium rhizogenes (strain K84 / ATCC BAA-868) (Agrobacterium radiobacter).